The following is a 389-amino-acid chain: MSTKPFYRDTWAEIDLSAIKENVSNMKKHIGEHVHLMAVVKANAYGHGDAETAKAALDAGASCLAVAILDEAISLRKKGLKAPILVLGAVPPEYVAIAAEYDVTLTGYSVEWLQEAARHTKKGSLHFHLKVDTGMNRLGVKTEEEVQNVMAILDRNPRLKCKGVFTHFATADEKERGYFLMQFERFKELIAPLPLKNLMVHCANSAAGLRLKKGFFNAVRFGIGMYGLRPSADMSDEIPFQLRPAFTLHSTLSHVKLIRKGESVSYGAEYTAEKDTWIGTVPVGYADGWLRKLKGTDILVKGKRLKIAGRICMDQFMVELDQEYPPGTKVTLIGRQGDEYISMDEIAGRLETINYEVACTISSRVPRMFLENGSIMEVRNPLLQVNISN.

Lys-41 serves as the catalytic Proton acceptor; specific for D-alanine. Lys-41 bears the N6-(pyridoxal phosphate)lysine mark. A substrate-binding site is contributed by Arg-137. Tyr-266 serves as the catalytic Proton acceptor; specific for L-alanine. Met-313 lines the substrate pocket.

Belongs to the alanine racemase family. Pyridoxal 5'-phosphate serves as cofactor.

It catalyses the reaction L-alanine = D-alanine. It functions in the pathway amino-acid biosynthesis; D-alanine biosynthesis; D-alanine from L-alanine: step 1/1. Functionally, catalyzes the interconversion of L-alanine and D-alanine. May also act on other amino acids. This chain is Alanine racemase 1 (alr1), found in Bacillus subtilis (strain 168).